We begin with the raw amino-acid sequence, 378 residues long: Putative glutamate--cysteine ligase 2 (378 aa).

This sequence belongs to the glutamate--cysteine ligase type 2 family. YbdK subfamily.

It carries out the reaction L-cysteine + L-glutamate + ATP = gamma-L-glutamyl-L-cysteine + ADP + phosphate + H(+). ATP-dependent carboxylate-amine ligase which exhibits weak glutamate--cysteine ligase activity. In Ectopseudomonas mendocina (strain ymp) (Pseudomonas mendocina), this protein is Putative glutamate--cysteine ligase 2.